Reading from the N-terminus, the 89-residue chain is DNA-directed RNA polymerase subunit omega (89 aa).

The protein belongs to the RNA polymerase subunit omega family. In terms of assembly, the RNAP catalytic core consists of 2 alpha, 1 beta, 1 beta' and 1 omega subunit. When a sigma factor is associated with the core the holoenzyme is formed, which can initiate transcription.

The catalysed reaction is RNA(n) + a ribonucleoside 5'-triphosphate = RNA(n+1) + diphosphate. Its function is as follows. Promotes RNA polymerase assembly. Latches the N- and C-terminal regions of the beta' subunit thereby facilitating its interaction with the beta and alpha subunits. In Idiomarina loihiensis (strain ATCC BAA-735 / DSM 15497 / L2-TR), this protein is DNA-directed RNA polymerase subunit omega.